A 160-amino-acid chain; its full sequence is Succinate dehydrogenase assembly factor 2-B, mitochondrial (160 aa).

The transit peptide at Met-1–Ala-23 directs the protein to the mitochondrion.

The protein belongs to the SDHAF2 family. In terms of assembly, interacts with the flavoprotein subunit within the SDH catalytic dimer.

It localises to the mitochondrion matrix. In terms of biological role, plays an essential role in the assembly of succinate dehydrogenase (SDH), an enzyme complex (also referred to as respiratory complex II) that is a component of both the tricarboxylic acid (TCA) cycle and the mitochondrial electron transport chain, and which couples the oxidation of succinate to fumarate with the reduction of ubiquinone (coenzyme Q) to ubiquinol. Required for flavinylation (covalent attachment of FAD) of the flavoprotein subunit of the SDH catalytic dimer. The polypeptide is Succinate dehydrogenase assembly factor 2-B, mitochondrial (Drosophila pseudoobscura pseudoobscura (Fruit fly)).